Reading from the N-terminus, the 50-residue chain is Ampulexin 1 (50 aa).

The N-terminal stretch at methionine 1–proline 26 is a signal peptide.

In terms of assembly, monomer. Expressed in venom sac and, to a lesser extent, in venom gland. Not expressed in brain.

Its subcellular location is the secreted. In terms of biological role, amphipathic peptide which probably adopts an alpha-helical structure. When injected in subesophageal ganglia of cockroach P.americana, a natural host for larvae of A.compressa, dampens the escape response for about 1 hour which may contribute to early stages of hypokinesia. Has no antimicrobial activity against E.coli DH5alpha or B.thuringiensis. Is not cytotoxic in vitro. This chain is Ampulexin 1, found in Ampulex compressa (Emerald cockroach wasp).